We begin with the raw amino-acid sequence, 273 residues long: DnaJ homolog subfamily C member 27-A (273 aa).

Residues 23-30 (GNAEVGKS), 71-75 (DMAGH), and 134-137 (NKID) contribute to the GTP site. One can recognise a J domain in the interval 217-273 (DSWDMLGVKPGATRDEVNKAYRKLAVLLHPDKCMAPGSEDAFKAVVNARTALLKNIK).

Belongs to the small GTPase superfamily. Rab family.

Its subcellular location is the nucleus. Functionally, GTPase possibly involved in regulation of the MEK/ERK pathway. This Xenopus laevis (African clawed frog) protein is DnaJ homolog subfamily C member 27-A (dnajc27-a).